The following is an 81-amino-acid chain: UPF0248 protein SSO2687 (81 aa).

The protein belongs to the UPF0248 family.

The chain is UPF0248 protein SSO2687 from Saccharolobus solfataricus (strain ATCC 35092 / DSM 1617 / JCM 11322 / P2) (Sulfolobus solfataricus).